The sequence spans 465 residues: MENFSIFNVTVNVWHADLDVGNSDLSLRALTGLLLSLLILSTLLGNTLVCLAVIKFRHLRSKVTNFFVISLAVSDLFVALLVMPWKAVTEVAGFWVFGDFCDTWVAFDIMCSTASILNLCIISLDRYWAIASPFRYERKMTQRVAFIMIGVAWTLSILISFIPVQLSWHKSHEADEELNGVNHTENCDSSLNRTYAISSSLISFYIPVVIMIGTYTRIYRIAQTQIRRISSLERAVEHAQRCSSRLSNENSLKTSFRKETKVLKTLSIIMGVFVFCWLPFFVLNCMIPFCHMNLPGQNEPEPPCVSETTFNIFVWFGWANSSLNPVIYAFNADFRKAFTTILGCNRFCSSNNVEAVNFSNELVSYHHDTTFQKDIPVTFNNSHLPNVVDQDQEVLEGTCFDKVSVLSTSHGTRSQKNLHLPAGVQFECEAEITLETITPFTSTGPLECLPQLVADEDRHYTTKLY.

At 1-30 the chain is on the extracellular side; it reads MENFSIFNVTVNVWHADLDVGNSDLSLRAL. N-linked (GlcNAc...) asparagine glycans are attached at residues Asn3 and Asn8. The chain crosses the membrane as a helical span at residues 31-54; that stretch reads TGLLLSLLILSTLLGNTLVCLAVI. Residues 55 to 65 lie on the Cytoplasmic side of the membrane; the sequence is KFRHLRSKVTN. A helical membrane pass occupies residues 66 to 92; sequence FFVISLAVSDLFVALLVMPWKAVTEVA. Residues 93–101 are Extracellular-facing; that stretch reads GFWVFGDFC. Cysteines 101 and 187 form a disulfide. The chain crosses the membrane as a helical span at residues 102–124; that stretch reads DTWVAFDIMCSTASILNLCIISL. Residues 125–143 are Cytoplasmic-facing; sequence DRYWAIASPFRYERKMTQR. A helical membrane pass occupies residues 144–168; that stretch reads VAFIMIGVAWTLSILISFIPVQLSW. Topologically, residues 169–193 are extracellular; it reads HKSHEADEELNGVNHTENCDSSLNR. Residues 194–219 traverse the membrane as a helical segment; that stretch reads TYAISSSLISFYIPVVIMIGTYTRIY. Residues 220–264 lie on the Cytoplasmic side of the membrane; the sequence is RIAQTQIRRISSLERAVEHAQRCSSRLSNENSLKTSFRKETKVLK. Residues 265–291 form a helical membrane-spanning segment; the sequence is TLSIIMGVFVFCWLPFFVLNCMIPFCH. The Extracellular segment spans residues 292 to 309; sequence MNLPGQNEPEPPCVSETT. The helical transmembrane segment at 310–334 threads the bilayer; it reads FNIFVWFGWANSSLNPVIYAFNADF. At 335-465 the chain is on the cytoplasmic side; sequence RKAFTTILGC…EDRHYTTKLY (131 aa). A lipid anchor (S-palmitoyl cysteine) is attached at Cys344.

Belongs to the G-protein coupled receptor 1 family. Brain and kidney.

It is found in the cell membrane. The protein localises to the cell projection. The protein resides in the cilium membrane. Its function is as follows. This is one of the five types (D1 to D5) of receptors for dopamine. The activity of this receptor is mediated by G proteins which activate adenylyl cyclase. The sequence is that of D(1C) dopamine receptor (drd1c) from Xenopus laevis (African clawed frog).